The following is a 171-amino-acid chain: Peptide deformylase (171 aa).

Residues C92 and H134 each contribute to the Fe cation site. E135 is an active-site residue. Fe cation is bound at residue H138.

The protein belongs to the polypeptide deformylase family. Fe(2+) is required as a cofactor.

The enzyme catalyses N-terminal N-formyl-L-methionyl-[peptide] + H2O = N-terminal L-methionyl-[peptide] + formate. Functionally, removes the formyl group from the N-terminal Met of newly synthesized proteins. Requires at least a dipeptide for an efficient rate of reaction. N-terminal L-methionine is a prerequisite for activity but the enzyme has broad specificity at other positions. This is Peptide deformylase from Polynucleobacter necessarius subsp. necessarius (strain STIR1).